We begin with the raw amino-acid sequence, 272 residues long: Large ribosomal subunit protein uL2cz/uL2cy (272 aa).

Disordered stretches follow at residues 1-33 (MAIH…SGQR) and 220-272 (VMNP…RRSK). Ala-2 carries the post-translational modification N-methylalanine. The segment covering 7-30 (KTSTSSTRNGAVQVKSNPRNNLIS) has biased composition (polar residues).

This sequence belongs to the universal ribosomal protein uL2 family. As to quaternary structure, component of the chloroplast large ribosomal subunit (LSU). Mature 70S chloroplast ribosomes of higher plants consist of a small (30S) and a large (50S) subunit. The 30S small subunit contains 1 molecule of ribosomal RNA (16S rRNA) and 24 different proteins. The 50S large subunit contains 3 rRNA molecules (23S, 5S and 4.5S rRNA) and 33 different proteins.

The protein resides in the plastid. The protein localises to the chloroplast. In terms of biological role, component of the chloroplast ribosome (chloro-ribosome), a dedicated translation machinery responsible for the synthesis of chloroplast genome-encoded proteins, including proteins of the transcription and translation machinery and components of the photosynthetic apparatus. The polypeptide is Large ribosomal subunit protein uL2cz/uL2cy (rpl2-A) (Spinacia oleracea (Spinach)).